Here is a 423-residue protein sequence, read N- to C-terminus: Histidine--tRNA ligase (423 aa).

Belongs to the class-II aminoacyl-tRNA synthetase family. Homodimer.

It localises to the cytoplasm. It catalyses the reaction tRNA(His) + L-histidine + ATP = L-histidyl-tRNA(His) + AMP + diphosphate + H(+). The polypeptide is Histidine--tRNA ligase (Actinobacillus pleuropneumoniae serotype 7 (strain AP76)).